The chain runs to 209 residues: MVEPREQFFQDLLSAVDKQMDTVKNDIKDIMKEKTSFMASFENFIERYDTMEKNIQDLQNKYEEMAINLAAVMTDTKIQLGAIIAQLEILMINGTPLPAKKTTIKEATPLPSSNTNNEQSMSTYSSSISGKTSETVKKNPTNAMFFTRSEWASSKEFREKFLTPEIQAILDEQFANKTGIERLHAEGLYMWRTQFSDEQKKMVKEMMKK.

The stretch at 13-75 (LSAVDKQMDT…AINLAAVMTD (63 aa)) forms a coiled coil. The interval 107-135 (ATPLPSSNTNNEQSMSTYSSSISGKTSET) is disordered. Positions 110-119 (LPSSNTNNEQ) are enriched in polar residues. The segment covering 120 to 133 (SMSTYSSSISGKTS) has biased composition (low complexity).

Belongs to the asfivirus K205R family.

The protein resides in the host cytoplasm. Functionally, induces host endoplasmic reticulum stress and consequently activates autophagy and NF-kappa-B signaling pathway. In turn, may induce autophagy-mediated STING1 degradation and innate immune evasion. This is an uncharacterized protein from Ornithodoros (relapsing fever ticks).